Consider the following 278-residue polypeptide: Ras-related protein Rab-40B (278 aa).

GTP is bound by residues S23, G26, and K27. A switch-I region spans residues S41–I49. D69 is a binding site for Mg(2+). G72, N126, and R127 together coordinate GTP. The interval G72–Q88 is switch-II. Residues L175–A228 enclose the SOCS box domain. The tract at residues S242–S278 is disordered. Over residues T248–L259 the composition is skewed to basic residues. Residues P267–S278 are compositionally biased toward polar residues. C270 carries the S-palmitoyl cysteine lipid modification. Residue C275 is the site of S-geranylgeranyl cysteine attachment.

Belongs to the small GTPase superfamily. Rab family. In terms of assembly, component of the cullin-5-RING E3 ubiquitin-protein ligase complex (ECS(RAB40B) complex) composed of CUL5, Elongin BC (ELOB and ELOC), RNF7/RBX2 and RAB40B; RAB40B interaction with ECS complex is GTP-independent. Binds (GTP-bound) LIMA1; interaction promotes LIMA1 subcellular localization in lamellipodia during cell migration. Interacts (GTP-bound) with TKS5/SH3PXD2A (via PX domain); interaction promotes invadopodia-mediated extracellular matrix degradation. Mg(2+) is required as a cofactor.

The protein localises to the cell membrane. It is found in the cytoplasm. The protein resides in the cytosol. It localises to the cell projection. Its subcellular location is the lamellipodium membrane. The protein localises to the ruffle. It catalyses the reaction GTP + H2O = GDP + phosphate + H(+). It functions in the pathway protein modification; protein ubiquitination. Its activity is regulated as follows. Regulated by guanine nucleotide exchange factors (GEFs) which promote the exchange of bound GDP for free GTP. Regulated by GTPase activating proteins (GAPs) which increase the GTP hydrolysis activity. Inhibited by GDP dissociation inhibitors (GDIs). In terms of biological role, RAB40B small GTPase acts as substrate-recognition components of the ECS(RAB40B) E3 ubiquitin ligase complex which mediates the ubiquitination of target proteins. The Rab40 subfamily belongs to the Rab family that are key regulators of intracellular membrane trafficking, from the formation of transport vesicles to their fusion with membranes. Rabs cycle between an inactive GDP-bound form and an active GTP-bound form that is able to recruit to membranes different sets of downstream effectors directly responsible for vesicle formation, movement, tethering and fusion. As part of the ECS(RAB40B) complex, GTP-bound RAB40B promotes LIMA1/EPLIN ubiquitination and degradation, thereby regulating leading-edge actin dynamics during cell migration. As part of the ECS(RAB40B) complex, GTP-bound RAB40B also ubiquitinates RAP2A GTPase which promotes its localization to lamellipodia and activation to drive cell migration. The ECS(RAB40B) complex does not mediate canonical ubiquitin-dependent degradation of RAP2. RAB40B also binds TKS5/SH3PXD2A effector independently from ECS complex to promote invadopodia-mediated extracellular matrix degradation. The polypeptide is Ras-related protein Rab-40B (Homo sapiens (Human)).